A 436-amino-acid polypeptide reads, in one-letter code: MALPTIAIVGRPNVGKSTLFNRIAGERISIVEDVEGVTRDRIYATGEWLNRKFSLIDTGGIDDVDAPFMEQIKHQAEIAMDEADVIVFVVSGKEGVTDADEYVSRILYKTNKPVILVVNKVDNPEMRNDIYDFYSLGLGDPYPVSSVHGIGTGDVLDAIIENLPAQEAEENPDIIKFSLIGRPNVGKSSLINAILGEERVIASPVAGTTRDAIDTHFTDPEGQEFTMIDTAGMRKSGKVYENTEKYSVMRAMRAIERSDVILMVINAEEGIREYDKRIAGFAHEAGKGMIIVVNKWDTLEKDNHTMKQWEDDIRDQFQYLSYAPIIFVSALTKQRLHKLPEMIKAISESQNTRIPSAVLNDVIMDAIAINPTPTDKGKRLKIFYATQVATKPPTFVVFVNEEELMHFSYMRFLENQIRKAFVFEGTPIHLIARKRK.

EngA-type G domains lie at 4–167 (PTIA…PAQE) and 175–351 (IKFS…ESQN). GTP contacts are provided by residues 10–17 (GRPNVGKS), 57–61 (DTGGI), 119–122 (NKVD), 181–188 (GRPNVGKS), 229–233 (DTAGM), and 294–297 (NKWD). In terms of domain architecture, KH-like spans 352–436 (TRIPSAVLND…PIHLIARKRK (85 aa)).

The protein belongs to the TRAFAC class TrmE-Era-EngA-EngB-Septin-like GTPase superfamily. EngA (Der) GTPase family. As to quaternary structure, associates with the 50S ribosomal subunit.

Functionally, GTPase that plays an essential role in the late steps of ribosome biogenesis. This is GTPase Der from Streptococcus suis (strain 98HAH33).